Consider the following 180-residue polypeptide: Protein SPMIP9 (180 aa).

In terms of assembly, microtubule inner protein component of sperm flagellar doublet microtubules. As to expression, testis-specific. Detected in the germ cell lineage at all stages.

It is found in the nucleus. Its subcellular location is the cytoplasm. The protein resides in the cytoskeleton. It localises to the flagellum axoneme. Functionally, microtubule inner protein (MIP) part of the dynein-decorated doublet microtubules (DMTs) in flagella axoneme. The sequence is that of Protein SPMIP9 from Homo sapiens (Human).